The following is a 284-amino-acid chain: Signal peptidase I (284 aa).

Residues 4–22 (NFPLLLVIAVAVCGALALV) form a helical membrane-spanning segment. The Cytoplasmic portion of the chain corresponds to 23 to 58 (DLVLFAPRRRAAISSYEGQVNEPDPAVLEKLNKEPL). A helical membrane pass occupies residues 59 to 77 (LVEYGKSFFPVLFIVLVLR). Over 78–284 (SFLVEPFQIP…PNFSRVGVIH (207 aa)) the chain is Periplasmic. Catalysis depends on residues Ser90 and Lys145.

Belongs to the peptidase S26 family.

Its subcellular location is the cell inner membrane. The enzyme catalyses Cleavage of hydrophobic, N-terminal signal or leader sequences from secreted and periplasmic proteins.. This Pseudomonas aeruginosa (strain ATCC 15692 / DSM 22644 / CIP 104116 / JCM 14847 / LMG 12228 / 1C / PRS 101 / PAO1) protein is Signal peptidase I (lepB).